A 186-amino-acid polypeptide reads, in one-letter code: Protein FAM9B (186 aa).

Residues 1–93 (MAAWGKKHAG…KHALRKKQLK (93 aa)) are disordered. 2 stretches are compositionally biased toward basic and acidic residues: residues 10 to 27 (GKDP…FTET) and 34 to 58 (DEHG…KPED). Residues 66-93 (KRKRMKMDKTCSKTKNKSKHALRKKQLK) are compositionally biased toward basic residues.

This sequence belongs to the XLR/SYCP3 family. In terms of tissue distribution, expressed in testis and ovary (at protein level).

The protein localises to the nucleus. Its subcellular location is the cytoplasm. It localises to the chromosome. Its function is as follows. May play a role in meiosis. The sequence is that of Protein FAM9B from Homo sapiens (Human).